A 1098-amino-acid chain; its full sequence is Beta-alanine-activating enzyme (1098 aa).

Residues 198 to 206 (TSGTTGIPK), Asp-428, Arg-442, and Lys-527 contribute to the ATP site. In terms of domain architecture, Carrier spans 553–630 (EDLWEKLQYL…EIYNHILQTV (78 aa)). Position 589 is an O-(pantetheine 4'-phosphoryl)serine (Ser-589). Phosphoserine is present on residues Ser-649 and Ser-724.

The protein belongs to the ATP-dependent AMP-binding enzyme family. Ubiquitously expressed in adult tissues.

Its function is as follows. Covalently binds beta-alanine in an ATP-dependent manner to form a thioester bond with its phosphopantetheine group and transfers it to an, as yet, unknown acceptor. May be required for a post-translational protein modification or for post-transcriptional modification of an RNA. The polypeptide is Beta-alanine-activating enzyme (AASDH) (Homo sapiens (Human)).